Consider the following 2776-residue polypeptide: MDGVAEFSEYVSETVDVPSPFDLLEPPTSGGFLKLSKPCCYIFPGGRGDSALFAVNGFNILVDGGSDRKSCFWKLVRHLDRIDSVLLTHIGADNLPGINGLLQRKVAELEEEQSQGSSSYSDWVKNLISPELGVVFFNVPDKLRLPDASRKAKRSIEEACLTLQHLNRLGIQAEPLYRVVSNTIEPLTLFHKMGVGRLDMYVLNPVKDSKEMQFLMQKWAGNSKAKTGIVLANGKEAEISVPYLTSITALVVWLPANPTEKIVRVLFPGNAPQNKILEGLEKLRHLDFLRYPVATQKDLAAGAVPANLKPSKIKHRADSKESLKAAPKTAMSKLAKREEVLEEGAKEARSELAKELAKSEKKAKEPSEKPPEKPSKPERVRTESSEALKAEKRKLIKDKVGKKHLKEKISKLEEKRDKEKKEIKKERKELKKEEGRKEEKKDAKKDEKRKDTKPELKKFSKPDLKPFTPEVRKTLYKAKAPGRLKVDKGRAARGEKELSSEPRTPPAQKGAAPPPAASGHRELALSSPEDLTQDFEELKREERGLLAEPRDTELGEKPLPADASEQGRPSTAIQVTQPPASVLEQEQVEREKEVVPDFPEDKGSKNRAPDSGAEVEREKETWEERKPREAELTPENIAAAREESEPEVKEDVIEKAELEEMEEVHPSDEEEEETKAESFYQKHMQEALKVIPKGREALGGRELGFQGKAPEKETASFLSSLATPAGAAEHVSYIQDETIPGYSETEQTISDEEIHDEPDERPAPPRFPTSTYDLSGPEGPGPFEASQSAESAVPASSSKTYGAPETELTYPPNMVAAPLAEEEHVSSATSITECDKLSSFATSVAEDQSVASLTAPQTEETGKSSLLLDTVTSIPSSRTEATQGLDYVPSAGTISPTSSLEEDKGFKSPPCEDFSVTGESEKKGESVGRGLTGEKAVGKEEKNVTTSEKLSSQYAAVFGAPGHALHPGEPALGEVEERCLSPDDSTVKMASPPPSGPPSAAHTPFHQSPVEEKSEPQDFQEDSWGDTKHAPGVSKEDAEEQTVKPGPEEAMSEEGKVPLSRSPQAQDTLGSLAGGQTGCTIQLLPEQDKAVVFETGEAGAASGAGSLPGEVRTQEPAEPQKDELLGFTDQSFSPEDAESLSVLSVVSPDTAKQEATPRSPCTPKEQQLHKDLWPMVSPEDTQSLSFSEESPSKETSLDISSKQLSPESLGTLQFGELSLGKEEKGPLVKAEDNSCHLAPVSIPEPHTATVSPPTDEAAGEAGLTDESPAGNLPGSSFSHSALSGDRKHSPGEITGPGGHFMTSDSSLTKSPESLSSPAMEDLAMEWGGKAPGSEDRATEQKEKELERKSETLQQKDQILSEKAALVQRDSVMHQKDEALDEENKPGGQQDKTSEQKGRDLDKKDTAVELGKGPEPKGKDLYLEDQGLAEKDKALEQRGAALQQTQAPEPRARAQEHRDLEQKDEHLELRDKTPEEKDKVLVLEDRAPEHIIPQPTQTDRAPEHRSKVDKEQKDEASEEKEQVLEQKDWAREKEGAALDQDNRAAGQKDGTLKEDKTQGQKSSFLEDKSTTPKEMTLDQKSPEKAKGVEQQDGAVPEKTRALGLEESPEEEGKAREQEEKYWKEQDVVQGWRETSPTRGEPVPAWEGKSPEQEVRYWRDRDITLQQDAYWKELSCERKVWFPHELDGQGARPRYSEERESTFLDEGPNEQEITPLQHTPRSPWASDFKDFQEPLPQKGLEVERWLAESPVGLPPEEEDKLTRSPFEIISPPASPPEMTGQRVPSAPGQESPVPDTKSTPPTRNEPTTPSWLAEIPPWVPKDRPLPPAPLSPAPAPPTPAPDPHAPAPFSWGIAEYDSVVAAVQEGAAELEGGPYSPLGKDYRKAEGEREGEGGAGAPDSSSFSSKVPEVTESHTTRDAEQTEPEQREPTPYPDERSFQYADIYEQMMLTGLGPACPTREPPLGASGDWPPHLSTKEEAAGRNKSAEKELSSAVSPPNLHSDTPTFSYASLAGPTIPPRQEPEPGPNVEPSFTPPAVPPRAPISLSQDPSPPLNGSTTSCGPDRRTPSPKEAGRSHWDDGTNDSDLEKGAREQPEKETQSPSPHHPMPVGHPSLWPETEAHSSLSSDSHLGPVRPSLDFPASAFGFSSLQPAPPQLPSPAEPRSAPCGSLAFSGDRALALVPGTPTRTRHDEYLEVTKAPSLDSSLPQLPSPSSPGAPLLSNLPRPASPALSEGSSSEATTPVISSVAERFPPGLEVAEQSSGELGPGNEPAAHSLWDLTPLSPAPLASRDLAPAPAPAPAPSLPGNLGDGTLSCRPECSGELTKKPSPFLSHSGDHEANGPGETSLNPPGFATATAEKEEAEALHAWERGSWPEGAERSSRPDTLLSSEQRPGKSSGGPPCSLSSEVEAGPQGCATDPRPHCGELSPSFLNPPLPPSTDDSDLSTEEARLAGKGGRRRAGRPGATGGPCPMADETPPTSASDSGSSQSDSDVPPETEECPSITAEAALDSDEDGDFLPVDKAGGVSGTHHPRPGHDPPPAPLPDPRPPPPRPDVCMADPEGLSSESGRVERLREKVQGRPGRKAPGRAKPASPARRLDIRGKRSPTPGKGPVDRTSRALPRPRSTPSQVTSEEKDGHSPMSKGLVNGLKAGSTALGSKGSSGPPVYVDLAYIPNHCSGKTADQDFFRRVRASYYVVSGNDPANGEPSRAVLDALLEGKAQWGENLQVTLIPTHDTEVTREWYQQTHEQQQQLNVLVLASSSTVVMQDESFPACKIEF.

Phosphoserine is present on residues Ser-114, Ser-117, Ser-118, Ser-121, and Ser-155. Tyr-177 is modified (phosphotyrosine). Residues 310-331 are disordered; that stretch reads PSKIKHRADSKESLKAAPKTAM. Phosphoserine occurs at positions 319 and 322. Residues 336-338 form repeat 1; that stretch reads KRE. The tract at residues 336–541 is 11 X 3 AA approximate repeats of K-K-[DE]; it reads KREEVLEEGA…TQDFEELKRE (206 aa). Residues 345 to 390 are compositionally biased toward basic and acidic residues; the sequence is AKEARSELAKELAKSEKKAKEPSEKPPEKPSKPERVRTESSEALKA. Disordered stretches follow at residues 345–678, 738–809, 846–1076, 1094–1210, 1223–1651, 1685–1729, 1744–1848, and 1866–2648; these read AKEA…KAES, TIPG…TELT, EDQS…AGGQ, ETGE…ESLG, EKGP…SPEQ, DGQG…FKDF, LAES…APFS, and AELE…NGLK. At Ser-384 the chain carries Phosphoserine. The segment covering 391–406 has biased composition (basic residues); the sequence is EKRKLIKDKVGKKHLK. Basic and acidic residues-rich tracts occupy residues 407 to 464 and 484 to 500; these read EKIS…KPDL and LKVD…ELSS. 9 tandem repeats follow at residues 415–417, 420–422, 424–426, 427–429, 431–433, 436–438, 440–442, 444–446, and 449–451. Thr-504 is modified (phosphothreonine). A phosphoserine mark is found at Ser-526 and Ser-527. Positions 536-556 are enriched in basic and acidic residues; sequence EELKREERGLLAEPRDTELGE. Repeat 11 spans residues 539 to 541; it reads KRE. Residues 567–579 are compositionally biased toward polar residues; it reads GRPSTAIQVTQPP. Over residues 587-631 the composition is skewed to basic and acidic residues; sequence QVEREKEVVPDFPEDKGSKNRAPDSGAEVEREKETWEERKPREAE. Phosphoserine is present on residues Ser-604 and Ser-611. Thr-633 carries the post-translational modification Phosphothreonine. Residues 640-667 show a composition bias toward basic and acidic residues; that stretch reads AREESEPEVKEDVIEKAELEEMEEVHPS. Ser-644, Ser-667, Ser-678, and Ser-786 each carry phosphoserine. 3 stretches are compositionally biased toward polar residues: residues 785 to 800, 846 to 859, and 870 to 882; these read ASQS…SSKT, EDQS…PQTE, and TVTS…TEAT. Phosphoserine occurs at positions 873, 876, 877, and 890. A Phosphothreonine modification is found at Thr-893. A phosphoserine mark is found at Ser-895, Ser-899, and Ser-908. Residues 944–954 show a composition bias toward polar residues; that stretch reads VTTSEKLSSQY. Residues Ser-981, Ser-991, Ser-999, Ser-1008, Ser-1014, Ser-1023, and Ser-1062 each carry the phosphoserine modification. The residue at position 1068 (Thr-1068) is a Phosphothreonine. Over residues 1096–1105 the composition is skewed to low complexity; sequence GEAGAASGAG. The segment covering 1112–1124 has biased composition (basic and acidic residues); it reads RTQEPAEPQKDEL. Ser-1131, Ser-1133, Ser-1147, Ser-1159, Ser-1177, Ser-1187, Ser-1190, Ser-1196, Ser-1205, and Ser-1208 each carry phosphoserine. Over residues 1179–1189 the composition is skewed to polar residues; that stretch reads EDTQSLSFSEE. Residues 1197–1210 are compositionally biased toward polar residues; the sequence is LDISSKQLSPESLG. A compositionally biased stretch (basic and acidic residues) spans 1223 to 1234; sequence EKGPLVKAEDNS. 5 positions are modified to phosphoserine: Ser-1251, Ser-1289, Ser-1310, Ser-1313, and Ser-1316. The segment covering 1302–1317 has biased composition (low complexity); the sequence is TSDSSLTKSPESLSSP. Composition is skewed to basic and acidic residues over residues 1332–1350, 1370–1384, 1391–1435, 1449–1488, 1499–1541, and 1549–1599; these read GSED…RKSE, SVMH…EENK, KTSE…KALE, PRAR…RAPE, RAPE…DQDN, and GTLK…EKTR. Phosphoserine is present on residues Ser-1516, Ser-1580, and Ser-1606. Positions 1609–1625 are enriched in basic and acidic residues; the sequence is EEGKAREQEEKYWKEQD. Phosphoserine is present on residues Ser-1634 and Ser-1648. Residues 1709–1718 are compositionally biased toward polar residues; it reads QEITPLQHTP. Phosphoserine occurs at positions 1720, 1747, 1762, 1768, and 1772. A Phosphothreonine modification is found at Thr-1777. Phosphoserine occurs at positions 1783 and 1789. Residues 1794–1808 are compositionally biased toward polar residues; it reads TKSTPPTRNEPTTPS. The span at 1823–1844 shows a compositional bias: pro residues; the sequence is LPPAPLSPAPAPPTPAPDPHAP. Positions 1878–1890 are enriched in basic and acidic residues; it reads KDYRKAEGEREGE. A Phosphoserine modification is found at Ser-1902. Composition is skewed to basic and acidic residues over residues 1907 to 1935 and 1972 to 1988; these read EVTE…DERS and STKE…EKEL. Thr-1928 is modified (phosphothreonine). Residues 1990–2006 show a composition bias toward polar residues; sequence SAVSPPNLHSDTPTFSY. Ser-1993 is subject to Phosphoserine. Pro residues predominate over residues 2013-2039; sequence TIPPRQEPEPGPNVEPSFTPPAVPPRA. A Phosphothreonine modification is found at Thr-2031. Residues 2042–2058 are compositionally biased toward polar residues; that stretch reads SLSQDPSPPLNGSTTSC. A phosphoserine mark is found at Ser-2048 and Ser-2082. Residues 2060–2096 are compositionally biased toward basic and acidic residues; sequence PDRRTPSPKEAGRSHWDDGTNDSDLEKGAREQPEKET. A compositionally biased stretch (pro residues) spans 2149–2158; that stretch reads PAPPQLPSPA. Ser-2209, Ser-2226, Ser-2230, Ser-2233, and Ser-2234 each carry phosphoserine. Residues 2231–2242 show a composition bias toward polar residues; the sequence is EGSSSEATTPVI. Over residues 2279–2292 the composition is skewed to low complexity; sequence PLSPAPLASRDLAP. Over residues 2355–2367 the composition is skewed to basic and acidic residues; sequence AEKEEAEALHAWE. Position 2425 is a phosphoserine (Ser-2425). Residues 2478-2490 show a composition bias toward low complexity; it reads SASDSGSSQSDSD. Residues 2535-2551 are compositionally biased toward pro residues; sequence DPPPAPLPDPRPPPPRP. The segment covering 2566 to 2576 has biased composition (basic and acidic residues); the sequence is GRVERLREKVQ. Phosphoserine is present on residues Ser-2623 and Ser-2637.

It belongs to the MAP1 family. As to quaternary structure, 3 different light chains, LC1 (a cleavage product of MAP1B), LC2 (a cleavage product of MAP1A) and LC3 (produced by one of the MAP1LC3 genes), can associate with the MAP1A or MAP1B heavy chains. Interacts with guanylate kinase-like domain of DLG1, DLG2 and DLG4. Binds to CSNK1D. Interacts with TIAM2. In terms of assembly, interacts with ELAVL4. Post-translationally, phosphorylated by CSNK1D. LC2 is generated from MAP1A by proteolytic processing. It is free to associate with both MAP1A and MAP1B. As to expression, both isoforms highly expressed in brain, and to a lesser extent in embryo. Isoform 1 is also expressed at a low level in other tissues including heart and muscle.

The protein localises to the cytoplasm. It is found in the cytoskeleton. Structural protein involved in the filamentous cross-bridging between microtubules and other skeletal elements. The chain is Microtubule-associated protein 1A (Map1a) from Mus musculus (Mouse).